Consider the following 123-residue polypeptide: Small ribosomal subunit protein uS12 (123 aa).

Residues 1 to 29 (MPTINQLVRKGRVPQKAKSKVPAMEQNPQ) form a disordered region. A compositionally biased stretch (basic residues) spans 9 to 19 (RKGRVPQKAKS). Asp89 is subject to 3-methylthioaspartic acid.

This sequence belongs to the universal ribosomal protein uS12 family. In terms of assembly, part of the 30S ribosomal subunit. Contacts proteins S8 and S17. May interact with IF1 in the 30S initiation complex.

In terms of biological role, with S4 and S5 plays an important role in translational accuracy. Its function is as follows. Interacts with and stabilizes bases of the 16S rRNA that are involved in tRNA selection in the A site and with the mRNA backbone. Located at the interface of the 30S and 50S subunits, it traverses the body of the 30S subunit contacting proteins on the other side and probably holding the rRNA structure together. The combined cluster of proteins S8, S12 and S17 appears to hold together the shoulder and platform of the 30S subunit. The chain is Small ribosomal subunit protein uS12 from Erythrobacter litoralis (strain HTCC2594).